The sequence spans 293 residues: Glycine--tRNA ligase alpha subunit (293 aa).

Belongs to the class-II aminoacyl-tRNA synthetase family. As to quaternary structure, tetramer of two alpha and two beta subunits.

It is found in the cytoplasm. It catalyses the reaction tRNA(Gly) + glycine + ATP = glycyl-tRNA(Gly) + AMP + diphosphate. The chain is Glycine--tRNA ligase alpha subunit from Acaryochloris marina (strain MBIC 11017).